A 425-amino-acid polypeptide reads, in one-letter code: Glutamate-1-semialdehyde 2,1-aminomutase (425 aa).

The residue at position 265 (Lys265) is an N6-(pyridoxal phosphate)lysine.

This sequence belongs to the class-III pyridoxal-phosphate-dependent aminotransferase family. HemL subfamily. In terms of assembly, homodimer. Requires pyridoxal 5'-phosphate as cofactor.

It localises to the cytoplasm. The enzyme catalyses (S)-4-amino-5-oxopentanoate = 5-aminolevulinate. It participates in porphyrin-containing compound metabolism; protoporphyrin-IX biosynthesis; 5-aminolevulinate from L-glutamyl-tRNA(Glu): step 2/2. The protein is Glutamate-1-semialdehyde 2,1-aminomutase of Chromobacterium violaceum (strain ATCC 12472 / DSM 30191 / JCM 1249 / CCUG 213 / NBRC 12614 / NCIMB 9131 / NCTC 9757 / MK).